Consider the following 552-residue polypeptide: Serine palmitoyltransferase 3 (552 aa).

The disordered stretch occupies residues 1–29; sequence MANPGGGAVCNGKLHNHKKQSNGSQSRNC. A helical transmembrane segment spans residues 59 to 79; that stretch reads PLHVMVFTYMGYGIGTLFGYL. Lys371 bears the N6-(pyridoxal phosphate)lysine mark.

This sequence belongs to the class-II pyridoxal-phosphate-dependent aminotransferase family. In terms of assembly, component of the serine palmitoyltransferase (SPT) complex, which is composed of SPTLC1, SPTLC2 or SPTLC3 and SPTSSA or SPTSSB. The heterodimer consisting of SPTLC1 and SPTLC2/SPTLC3 forms the catalytic core of the enzyme, while SPTSSA or SPTSSB subunits determine substrate specificity. SPT also interacts with ORMDL proteins, especially ORMDL3, which negatively regulate SPT activity in the presence of ceramides. It depends on pyridoxal 5'-phosphate as a cofactor. As to expression, expressed in most tissues, except peripheral blood cells and bone marrow, with highest levels in heart, kidney, liver, uterus and skin.

It localises to the endoplasmic reticulum membrane. It carries out the reaction L-serine + hexadecanoyl-CoA + H(+) = 3-oxosphinganine + CO2 + CoA. The enzyme catalyses dodecanoyl-CoA + L-serine + H(+) = 3-oxotetradecasphinganine + CO2 + CoA. It catalyses the reaction tetradecanoyl-CoA + L-serine + H(+) = 3-oxohexadecasphinganine + CO2 + CoA. The catalysed reaction is octadecanoyl-CoA + L-serine + H(+) = 3-oxoeicosasphinganine + CO2 + CoA. It participates in lipid metabolism; sphingolipid metabolism. SPT complex catalytic activity is negatively regulated by ORMDL proteins, including ORMDL3, in the presence of ceramides. This mechanism allows to maintain ceramide levels at sufficient concentrations for the production of complex sphingolipids, but which prevents the accumulation of ceramides to levels that trigger apoptosis. Component of the serine palmitoyltransferase multisubunit enzyme (SPT) that catalyzes the initial and rate-limiting step in sphingolipid biosynthesis by condensing L-serine and activated acyl-CoA (most commonly palmitoyl-CoA) to form long-chain bases. The SPT complex is composed of SPTLC1, SPTLC2 or SPTLC3 and SPTSSA or SPTSSB. Within this complex, the heterodimer consisting of SPTLC1 and SPTLC2/SPTLC3 forms the catalytic core. The composition of the serine palmitoyltransferase (SPT) complex determines the substrate preference. The SPTLC1-SPTLC2-SPTSSA complex shows a strong preference for C16-CoA substrate, while the SPTLC1-SPTLC3-SPTSSA isozyme uses both C14-CoA and C16-CoA as substrates, with a slight preference for C14-CoA. The SPTLC1-SPTLC2-SPTSSB complex shows a strong preference for C18-CoA substrate, while the SPTLC1-SPTLC3-SPTSSB isozyme displays an ability to use a broader range of acyl-CoAs, without apparent preference. This is Serine palmitoyltransferase 3 from Homo sapiens (Human).